The sequence spans 126 residues: Large ribosomal subunit protein bL17 (126 aa).

This sequence belongs to the bacterial ribosomal protein bL17 family. As to quaternary structure, part of the 50S ribosomal subunit. Contacts protein L32.

The sequence is that of Large ribosomal subunit protein bL17 from Limosilactobacillus fermentum (strain NBRC 3956 / LMG 18251) (Lactobacillus fermentum).